Reading from the N-terminus, the 312-residue chain is Ribosomal RNA small subunit methyltransferase H (312 aa).

S-adenosyl-L-methionine contacts are provided by residues G37–H39, D57, F83, and D104.

The protein belongs to the methyltransferase superfamily. RsmH family.

It localises to the cytoplasm. It catalyses the reaction cytidine(1402) in 16S rRNA + S-adenosyl-L-methionine = N(4)-methylcytidine(1402) in 16S rRNA + S-adenosyl-L-homocysteine + H(+). In terms of biological role, specifically methylates the N4 position of cytidine in position 1402 (C1402) of 16S rRNA. This chain is Ribosomal RNA small subunit methyltransferase H, found in Malacoplasma penetrans (strain HF-2) (Mycoplasma penetrans).